The following is a 1517-amino-acid chain: DNA-directed RNA polymerase subunit beta' (1517 aa).

Residues C71, C73, C86, and C89 each coordinate Zn(2+). Residues D482, D484, and D486 each coordinate Mg(2+). Zn(2+)-binding residues include C812, C886, C893, and C896.

Belongs to the RNA polymerase beta' chain family. The RNAP catalytic core consists of 2 alpha, 1 beta, 1 beta' and 1 omega subunit. When a sigma factor is associated with the core the holoenzyme is formed, which can initiate transcription. It depends on Mg(2+) as a cofactor. Requires Zn(2+) as cofactor.

The enzyme catalyses RNA(n) + a ribonucleoside 5'-triphosphate = RNA(n+1) + diphosphate. DNA-dependent RNA polymerase catalyzes the transcription of DNA into RNA using the four ribonucleoside triphosphates as substrates. This Campylobacter jejuni subsp. jejuni serotype O:2 (strain ATCC 700819 / NCTC 11168) protein is DNA-directed RNA polymerase subunit beta'.